Here is a 159-residue protein sequence, read N- to C-terminus: ATP synthase subunit b', chloroplastic (159 aa).

Residues 30–47 (LMALQFLALTIILNLIYY) traverse the membrane as a helical segment.

Belongs to the ATPase B chain family. F-type ATPases have 2 components, F(1) - the catalytic core - and F(0) - the membrane proton channel. F(1) has five subunits: alpha(3), beta(3), gamma(1), delta(1), epsilon(1). F(0) has four main subunits: a(1), b(1), b'(1) and c(10-14). The alpha and beta chains form an alternating ring which encloses part of the gamma chain. F(1) is attached to F(0) by a central stalk formed by the gamma and epsilon chains, while a peripheral stalk is formed by the delta, b and b' chains.

Its subcellular location is the plastid. The protein resides in the chloroplast thylakoid membrane. Its function is as follows. F(1)F(0) ATP synthase produces ATP from ADP in the presence of a proton or sodium gradient. F-type ATPases consist of two structural domains, F(1) containing the extramembraneous catalytic core and F(0) containing the membrane proton channel, linked together by a central stalk and a peripheral stalk. During catalysis, ATP synthesis in the catalytic domain of F(1) is coupled via a rotary mechanism of the central stalk subunits to proton translocation. Component of the F(0) channel, it forms part of the peripheral stalk, linking F(1) to F(0). The b'-subunit is a diverged and duplicated form of b found in plants and photosynthetic bacteria. The chain is ATP synthase subunit b', chloroplastic from Antithamnion sp. (Red alga).